The chain runs to 212 residues: ATP-dependent Clp protease proteolytic subunit (212 aa).

Serine 112 (nucleophile) is an active-site residue. Residue histidine 137 is part of the active site.

Belongs to the peptidase S14 family. In terms of assembly, fourteen ClpP subunits assemble into 2 heptameric rings which stack back to back to give a disk-like structure with a central cavity, resembling the structure of eukaryotic proteasomes.

It localises to the cytoplasm. The enzyme catalyses Hydrolysis of proteins to small peptides in the presence of ATP and magnesium. alpha-casein is the usual test substrate. In the absence of ATP, only oligopeptides shorter than five residues are hydrolyzed (such as succinyl-Leu-Tyr-|-NHMec, and Leu-Tyr-Leu-|-Tyr-Trp, in which cleavage of the -Tyr-|-Leu- and -Tyr-|-Trp bonds also occurs).. Functionally, cleaves peptides in various proteins in a process that requires ATP hydrolysis. Has a chymotrypsin-like activity. Plays a major role in the degradation of misfolded proteins. The chain is ATP-dependent Clp protease proteolytic subunit from Thiobacillus denitrificans (strain ATCC 25259 / T1).